An 86-amino-acid polypeptide reads, in one-letter code: Small ribosomal subunit protein bS20 (86 aa).

Belongs to the bacterial ribosomal protein bS20 family.

Binds directly to 16S ribosomal RNA. This is Small ribosomal subunit protein bS20 from Novosphingobium aromaticivorans (strain ATCC 700278 / DSM 12444 / CCUG 56034 / CIP 105152 / NBRC 16084 / F199).